The primary structure comprises 248 residues: N-acylneuraminate-9-phosphatase (248 aa).

Residue Asp-12 coordinates Mg(2+). Phosphate contacts are provided by Leu-13, Asp-14, Thr-131, Asn-132, and Lys-164. Asp-14 contributes to the Mg(2+) binding site. Position 189 (Asp-189) interacts with Mg(2+).

It belongs to the HAD-like hydrolase superfamily. NANP family. It depends on Mg(2+) as a cofactor.

The enzyme catalyses N-acetylneuraminate 9-phosphate + H2O = N-acetylneuraminate + phosphate. It catalyses the reaction N-glycoloylneuraminate 9-phosphate + H2O = N-glycoloylneuraminate + phosphate. It participates in amino-sugar metabolism; N-acetylneuraminate biosynthesis. Its activity is regulated as follows. Inhibited by calcium. Inhibited by vanadate, sodium orthovanadate and phosphonate. Functionally, catalyzes the dephosphorylation of N-acylneuraminate 9-phosphate (Neu5Ac-9-P) to N-acetylneuraminic acid (Neu5Ac or sialic acid). Can also use N-glycoloylneuraminate 9-phosphate as substrate. The chain is N-acylneuraminate-9-phosphatase from Rattus norvegicus (Rat).